The chain runs to 353 residues: Photosystem II protein D1 (353 aa).

Thr-2 is modified (N-acetylthreonine). Phosphothreonine is present on Thr-2. 3 helical membrane-spanning segments follow: residues Tyr-29–Ser-46, His-118–Leu-133, and Trp-142–Ala-156. His-118 lines the chlorophyll a pocket. Tyr-126 lines the pheophytin a pocket. The [CaMn4O5] cluster site is built by Asp-170 and Glu-189. A helical transmembrane segment spans residues Phe-197–Leu-218. His-198 is a binding site for chlorophyll a. Residue His-215 participates in a quinone binding. Fe cation is bound by residues His-215 and His-272. Residues Phe-274–Leu-288 traverse the membrane as a helical segment. Residues His-332, Glu-333, Asp-342, and Ala-344 each contribute to the [CaMn4O5] cluster site. Positions Ala-345–Gly-353 are excised as a propeptide.

Belongs to the reaction center PufL/M/PsbA/D family. In terms of assembly, PSII is composed of 1 copy each of membrane proteins PsbA, PsbB, PsbC, PsbD, PsbE, PsbF, PsbH, PsbI, PsbJ, PsbK, PsbL, PsbM, PsbT, PsbX, PsbY, PsbZ, Psb30/Ycf12, at least 3 peripheral proteins of the oxygen-evolving complex and a large number of cofactors. It forms dimeric complexes. The D1/D2 heterodimer binds P680, chlorophylls that are the primary electron donor of PSII, and subsequent electron acceptors. It shares a non-heme iron and each subunit binds pheophytin, quinone, additional chlorophylls, carotenoids and lipids. D1 provides most of the ligands for the Mn4-Ca-O5 cluster of the oxygen-evolving complex (OEC). There is also a Cl(-1) ion associated with D1 and D2, which is required for oxygen evolution. The PSII complex binds additional chlorophylls, carotenoids and specific lipids. is required as a cofactor. Post-translationally, tyr-161 forms a radical intermediate that is referred to as redox-active TyrZ, YZ or Y-Z. C-terminally processed by CTPA; processing is essential to allow assembly of the oxygen-evolving complex and thus photosynthetic growth.

It localises to the plastid. The protein localises to the chloroplast thylakoid membrane. It carries out the reaction 2 a plastoquinone + 4 hnu + 2 H2O = 2 a plastoquinol + O2. Photosystem II (PSII) is a light-driven water:plastoquinone oxidoreductase that uses light energy to abstract electrons from H(2)O, generating O(2) and a proton gradient subsequently used for ATP formation. It consists of a core antenna complex that captures photons, and an electron transfer chain that converts photonic excitation into a charge separation. The D1/D2 (PsbA/PsbD) reaction center heterodimer binds P680, the primary electron donor of PSII as well as several subsequent electron acceptors. The protein is Photosystem II protein D1 of Brassica napus (Rape).